The primary structure comprises 522 residues: Sensory neuron membrane protein 1 (522 aa).

Over 1–11 (MKLPKHLKFAA) the chain is Cytoplasmic. The chain crosses the membrane as a helical span at residues 12-32 (GAGGAFLFGILFGWVMFPAIL). Residues 33 to 455 (KGQLKKEMAL…KFQLFYPKKA (423 aa)) lie on the Extracellular side of the membrane. 2 N-linked (GlcNAc...) asparagine glycosylation sites follow: N67 and N229. Cystine bridges form between C268–C333, C297–C350, and C335–C339. N-linked (GlcNAc...) asparagine glycosylation is present at N438. The chain crosses the membrane as a helical span at residues 456 to 476 (VGVIKWLLVTFGGFGLIGCTI). The Cytoplasmic segment spans residues 477-522 (YHYKDRIMSFASSPGSAAVTKVKPEEVEQKDVSVIGQPQEPAKINM).

It belongs to the CD36 family.

It localises to the cell membrane. Plays an olfactory role that is not restricted to pheromone sensitivity. The chain is Sensory neuron membrane protein 1 from Plutella xylostella (Diamondback moth).